The chain runs to 465 residues: A-type ATP synthase subunit B (465 aa).

It belongs to the ATPase alpha/beta chains family. In terms of assembly, has multiple subunits with at least A(3), B(3), C, D, E, F, H, I and proteolipid K(x).

The protein localises to the cell membrane. Its function is as follows. Component of the A-type ATP synthase that produces ATP from ADP in the presence of a proton gradient across the membrane. The B chain is a regulatory subunit. The protein is A-type ATP synthase subunit B of Thermococcus onnurineus (strain NA1).